We begin with the raw amino-acid sequence, 613 residues long: tRNA 5-methylaminomethyl-2-thiouridine biosynthesis bifunctional protein MnmC (613 aa).

Residues 1-225 are tRNA (mnm(5)s(2)U34)-methyltransferase; sequence MKKAKLIFKD…KREMIKAYLE (225 aa). The segment at 252 to 613 is FAD-dependent cmnm(5)s(2)U34 oxidoreductase; sequence IGAGISSAVL…FLVRKLKKGL (362 aa).

In the N-terminal section; belongs to the methyltransferase superfamily. tRNA (mnm(5)s(2)U34)-methyltransferase family. The protein in the C-terminal section; belongs to the DAO family. It depends on FAD as a cofactor.

The protein localises to the cytoplasm. The enzyme catalyses 5-aminomethyl-2-thiouridine(34) in tRNA + S-adenosyl-L-methionine = 5-methylaminomethyl-2-thiouridine(34) in tRNA + S-adenosyl-L-homocysteine + H(+). Functionally, catalyzes the last two steps in the biosynthesis of 5-methylaminomethyl-2-thiouridine (mnm(5)s(2)U) at the wobble position (U34) in tRNA. Catalyzes the FAD-dependent demodification of cmnm(5)s(2)U34 to nm(5)s(2)U34, followed by the transfer of a methyl group from S-adenosyl-L-methionine to nm(5)s(2)U34, to form mnm(5)s(2)U34. This Campylobacter jejuni subsp. doylei (strain ATCC BAA-1458 / RM4099 / 269.97) protein is tRNA 5-methylaminomethyl-2-thiouridine biosynthesis bifunctional protein MnmC.